We begin with the raw amino-acid sequence, 178 residues long: Large ribosomal subunit protein uL6 (178 aa).

This sequence belongs to the universal ribosomal protein uL6 family. As to quaternary structure, part of the 50S ribosomal subunit.

Its function is as follows. This protein binds to the 23S rRNA, and is important in its secondary structure. It is located near the subunit interface in the base of the L7/L12 stalk, and near the tRNA binding site of the peptidyltransferase center. The sequence is that of Large ribosomal subunit protein uL6 from Oenococcus oeni (strain ATCC BAA-331 / PSU-1).